A 159-amino-acid chain; its full sequence is ATP synthase subunit b (159 aa).

Residues 8-28 traverse the membrane as a helical segment; sequence ILATIINFIILILILKHFFWD.

It belongs to the ATPase B chain family. F-type ATPases have 2 components, F(1) - the catalytic core - and F(0) - the membrane proton channel. F(1) has five subunits: alpha(3), beta(3), gamma(1), delta(1), epsilon(1). F(0) has three main subunits: a(1), b(2) and c(10-14). The alpha and beta chains form an alternating ring which encloses part of the gamma chain. F(1) is attached to F(0) by a central stalk formed by the gamma and epsilon chains, while a peripheral stalk is formed by the delta and b chains.

The protein localises to the cell membrane. In terms of biological role, f(1)F(0) ATP synthase produces ATP from ADP in the presence of a proton or sodium gradient. F-type ATPases consist of two structural domains, F(1) containing the extramembraneous catalytic core and F(0) containing the membrane proton channel, linked together by a central stalk and a peripheral stalk. During catalysis, ATP synthesis in the catalytic domain of F(1) is coupled via a rotary mechanism of the central stalk subunits to proton translocation. Functionally, component of the F(0) channel, it forms part of the peripheral stalk, linking F(1) to F(0). The polypeptide is ATP synthase subunit b (Clostridium perfringens (strain SM101 / Type A)).